Reading from the N-terminus, the 727-residue chain is Pre-B-cell leukemia transcription factor-interacting protein 1 (727 aa).

Over residues 1–10 the composition is skewed to polar residues; it reads MASCPDSDNS. Positions 1-169 are disordered; it reads MASCPDSDNS…GREPSSSQPV (169 aa). Phosphoserine is present on residues S131, S142, S143, and S144. T148 is modified (phosphothreonine). S164 is modified (phosphoserine). 2 coiled-coil regions span residues 270–350 and 377–405; these read FLLD…RGVD and DPSL…WQLL. Over residues 446 to 456 the composition is skewed to polar residues; it reads QGINTGRSPND. 2 disordered regions span residues 446-565 and 694-727; these read QGIN…NSPD and LKKR…YHQG. Basic and acidic residues predominate over residues 473–563; that stretch reads WGGKEKWRGG…QKHSWGKDNS (91 aa). The short motif at 486 to 506 is the Nuclear localization signal element; the sequence is QKAEHWKPRKEESGQERQRSW. At S563 the chain carries Phosphoserine. Residues 691 to 716 carry the Nuclear localization signal motif; that stretch reads DKALKKRSRKKEKHSWNPRVVGPREE. Over residues 694–703 the composition is skewed to basic residues; it reads LKKRSRKKEK.

In terms of assembly, interacts with ESR1, PBX1, PBX2 and PBX3. Interacts with TEX11.

The protein localises to the cytoplasm. The protein resides in the cytoskeleton. Its subcellular location is the nucleus. Regulator of pre-B-cell leukemia transcription factors (BPXs) function. Inhibits the binding of PBX1-HOX complex to DNA and blocks the transcriptional activity of E2A-PBX1. Tethers estrogen receptor-alpha (ESR1) to microtubules and allows them to influence estrogen receptors-alpha signaling. This chain is Pre-B-cell leukemia transcription factor-interacting protein 1 (Pbxip1), found in Mus musculus (Mouse).